The following is a 657-amino-acid chain: MKRIRLVDLPLIIKIGFAPAFALLMLAVMAGGAILVQKSQSAALKQVVERDMRQNLEIQRISKRISNINGELFVVMTHKAGNIDVDKNDARMAAVLVETDAVKKDLLALKSKLPAEEQPKIAELIKSLEECRSAIDTVSGMISVDFNMAAGFIAPFEEQYVKMTGQLDQVVAAANQRIESESAKRQAQATAAMSVTIIMSLLTLGAVGALAFLTVMTTRKSINDIAAATDKLSKGDNSIDLEKMTRGDELGGIVTALKVFRDNQVHLEQLRADQEKSAALTADERRSKEAAAAAAAQEASLVVSNLAEGLEKLASGDLTFRVTADFPGDYRKLKDDFNAAMGSLQETMKVIAASTDGLSTGADEIAHASDDLSRRTEQQAASLEETAAALDELTATVRRTAAGARQASDVVSTTRGEATHSGQVVHQAVSAMGEIEKSSGQISQIIGVIDEIAFQTNLLALNAGVEAARAGEAGRGFAVVAQEVRALAQRSAEAAKEIKALISSSTQQVSQGVSLVGQTGEALQRIVTKVGEIDALVTEIAASAAEQATGLNEVNTAVNQMDQVTQQNAAMVEQSTAATHSLKGETAELVRLMARFQVGSGSSSYARPAVADAGHHAPARNPVAEQQARLNTFARPGRSSGSAALAQAPASDGWEEF.

Over 1–5 the chain is Cytoplasmic; the sequence is MKRIR. Residues 6 to 29 form a helical membrane-spanning segment; that stretch reads LVDLPLIIKIGFAPAFALLMLAVM. The Periplasmic portion of the chain corresponds to 30–188; sequence AGGAILVQKS…ESESAKRQAQ (159 aa). Residues 189 to 212 traverse the membrane as a helical segment; the sequence is ATAAMSVTIIMSLLTLGAVGALAF. Residues 213-657 lie on the Cytoplasmic side of the membrane; the sequence is LTVMTTRKSI…APASDGWEEF (445 aa). HAMP domains lie at 216-269 and 297-349; these read MTTR…HLEQ and QEAS…ETMK. Positions 354 to 583 constitute a Methyl-accepting transducer domain; that stretch reads STDGLSTGAD…QSTAATHSLK (230 aa). Position 378 is a glutamate methyl ester (Gln) (Gln378). Glutamate methyl ester (Glu) occurs at positions 385 and 392. A Glutamate methyl ester (Gln) modification is found at Gln574. The interval 634 to 657 is disordered; it reads ARPGRSSGSAALAQAPASDGWEEF.

The protein belongs to the methyl-accepting chemotaxis (MCP) protein family.

It is found in the cell membrane. Chemotactic-signal transducers respond to changes in the concentration of attractants and repellents in the environment, transduce a signal from the outside to the inside of the cell, and facilitate sensory adaptation through the variation of the level of methylation. Attractants increase the level of methylation while repellents decrease the level of methylation. In Caulobacter vibrioides (strain ATCC 19089 / CIP 103742 / CB 15) (Caulobacter crescentus), this protein is Chemoreceptor McpA (mcpA).